The primary structure comprises 312 residues: Olfactory receptor 4F6 (312 aa).

Residues 1 to 25 (MDEANHSVVSEFVFLGLSDSRKIQL) are Extracellular-facing. Asn5 carries N-linked (GlcNAc...) asparagine glycosylation. The helical transmembrane segment at 26 to 49 (LLFLFFSVFYVSSLMGNLLIVLTV) threads the bilayer. Residues 50–57 (TSDPRLQS) are Cytoplasmic-facing. The helical transmembrane segment at 58–79 (PMYFLLANLSIINLVFCSSTAP) threads the bilayer. Topologically, residues 80 to 100 (KMIYDLFRKHKTISFGGCVVQ) are extracellular. Cys97 and Cys189 are oxidised to a cystine. Residues 101 to 120 (IFFIHAVGGTEMVLLIAMAF) form a helical membrane-spanning segment. At 121–139 (DRYVAICKPLHYLTIMNPQ) the chain is on the cytoplasmic side. Residues 140–158 (RCILFLVISWIIGIIHSVI) traverse the membrane as a helical segment. At 159–195 (QLAFVVDLLFCGPNELDSFFCDLPRFIKLACIETYTL) the chain is on the extracellular side. A helical transmembrane segment spans residues 196–219 (GFMVTANSGFISLASFLILIISYI). The Cytoplasmic segment spans residues 220-235 (FILVTVQKKSSGGIFK). The chain crosses the membrane as a helical span at residues 236–258 (AFSMLSAHVIVVVLVFGPLIFFY). The Extracellular portion of the chain corresponds to 259 to 269 (IFPFPTSHLDK). The chain crosses the membrane as a helical span at residues 270–289 (FLAIFDAVITPVLNPVIYTF). Over 290-312 (RNKEMMVAMRRRCSQFVNYSKIF) the chain is Cytoplasmic.

It belongs to the G-protein coupled receptor 1 family.

Its subcellular location is the cell membrane. Functionally, odorant receptor. In Homo sapiens (Human), this protein is Olfactory receptor 4F6 (OR4F6).